The sequence spans 437 residues: tRNA(Ile2) 2-agmatinylcytidine synthetase TiaS (437 aa).

The protein belongs to the TiaS family.

It is found in the cytoplasm. It catalyses the reaction cytidine(34) in tRNA(Ile2) + agmatine + ATP + H2O = 2-agmatinylcytidine(34) in tRNA(Ile2) + AMP + 2 phosphate + 2 H(+). Its function is as follows. ATP-dependent agmatine transferase that catalyzes the formation of 2-agmatinylcytidine (agm2C) at the wobble position (C34) of tRNA(Ile2), converting the codon specificity from AUG to AUA. In Thermoplasma volcanium (strain ATCC 51530 / DSM 4299 / JCM 9571 / NBRC 15438 / GSS1), this protein is tRNA(Ile2) 2-agmatinylcytidine synthetase TiaS.